The primary structure comprises 228 residues: 7-cyano-7-deazaguanine synthase (228 aa).

10–20 (FSGGQDSTTLA) is an ATP binding site. The Zn(2+) site is built by Cys-190, Cys-205, Cys-208, and Cys-211.

Belongs to the QueC family. Zn(2+) serves as cofactor.

The catalysed reaction is 7-carboxy-7-deazaguanine + NH4(+) + ATP = 7-cyano-7-deazaguanine + ADP + phosphate + H2O + H(+). Its pathway is purine metabolism; 7-cyano-7-deazaguanine biosynthesis. In terms of biological role, catalyzes the ATP-dependent conversion of 7-carboxy-7-deazaguanine (CDG) to 7-cyano-7-deazaguanine (preQ(0)). The protein is 7-cyano-7-deazaguanine synthase of Helicobacter pylori (strain HPAG1).